The sequence spans 371 residues: tRNA-specific 2-thiouridylase MnmA (371 aa).

ATP is bound by residues Gly-13–Ser-20 and Met-39. An interaction with target base in tRNA region spans residues Asn-99–Asp-101. The active-site Nucleophile is Cys-104. Cys-104 and Cys-200 are oxidised to a cystine. Residue Gly-128 coordinates ATP. Residues Lys-150–Gln-152 form an interaction with tRNA region. Residue Cys-200 is the Cysteine persulfide intermediate of the active site. The tract at residues Arg-308–Tyr-309 is interaction with tRNA.

This sequence belongs to the MnmA/TRMU family.

It is found in the cytoplasm. The enzyme catalyses S-sulfanyl-L-cysteinyl-[protein] + uridine(34) in tRNA + AH2 + ATP = 2-thiouridine(34) in tRNA + L-cysteinyl-[protein] + A + AMP + diphosphate + H(+). Functionally, catalyzes the 2-thiolation of uridine at the wobble position (U34) of tRNA, leading to the formation of s(2)U34. This chain is tRNA-specific 2-thiouridylase MnmA, found in Bacillus cytotoxicus (strain DSM 22905 / CIP 110041 / 391-98 / NVH 391-98).